A 183-amino-acid chain; its full sequence is NADH-quinone oxidoreductase subunit B 2 (183 aa).

4 residues coordinate [4Fe-4S] cluster: Cys-47, Cys-48, Cys-113, and Cys-142.

It belongs to the complex I 20 kDa subunit family. As to quaternary structure, NDH-1 is composed of 14 different subunits. Subunits NuoB, C, D, E, F, and G constitute the peripheral sector of the complex. It depends on [4Fe-4S] cluster as a cofactor.

The protein resides in the cell inner membrane. It catalyses the reaction a quinone + NADH + 5 H(+)(in) = a quinol + NAD(+) + 4 H(+)(out). NDH-1 shuttles electrons from NADH, via FMN and iron-sulfur (Fe-S) centers, to quinones in the respiratory chain. The immediate electron acceptor for the enzyme in this species is believed to be ubiquinone. Couples the redox reaction to proton translocation (for every two electrons transferred, four hydrogen ions are translocated across the cytoplasmic membrane), and thus conserves the redox energy in a proton gradient. The protein is NADH-quinone oxidoreductase subunit B 2 of Anaeromyxobacter sp. (strain Fw109-5).